Here is a 199-residue protein sequence, read N- to C-terminus: ATP-dependent Clp protease proteolytic subunit (199 aa).

Ser-99 (nucleophile) is an active-site residue. The active site involves His-124.

It belongs to the peptidase S14 family. Fourteen ClpP subunits assemble into 2 heptameric rings which stack back to back to give a disk-like structure with a central cavity, resembling the structure of eukaryotic proteasomes.

The protein resides in the cytoplasm. It carries out the reaction Hydrolysis of proteins to small peptides in the presence of ATP and magnesium. alpha-casein is the usual test substrate. In the absence of ATP, only oligopeptides shorter than five residues are hydrolyzed (such as succinyl-Leu-Tyr-|-NHMec, and Leu-Tyr-Leu-|-Tyr-Trp, in which cleavage of the -Tyr-|-Leu- and -Tyr-|-Trp bonds also occurs).. Functionally, cleaves peptides in various proteins in a process that requires ATP hydrolysis. Has a chymotrypsin-like activity. Plays a major role in the degradation of misfolded proteins. This Lactococcus lactis subsp. cremoris (strain SK11) protein is ATP-dependent Clp protease proteolytic subunit.